We begin with the raw amino-acid sequence, 660 residues long: Bifunctional polymyxin resistance protein ArnA (660 aa).

Residues M1–L304 are formyltransferase ArnAFT. The active-site Proton donor; for formyltransferase activity is the H104. (6R)-10-formyltetrahydrofolate is bound by residues R114 and T136–D140. Residues R314–Q660 are dehydrogenase ArnADH. NAD(+) is bound by residues D347 and D368–I369. Residues A393, Y398, and T432–S433 each bind UDP-alpha-D-glucuronate. The Proton acceptor; for decarboxylase activity role is filled by E434. UDP-alpha-D-glucuronate is bound by residues R460, N492, K526–R535, and Y613. Residue R619 is the Proton donor; for decarboxylase activity of the active site.

The protein in the N-terminal section; belongs to the Fmt family. UDP-L-Ara4N formyltransferase subfamily. It in the C-terminal section; belongs to the NAD(P)-dependent epimerase/dehydratase family. UDP-glucuronic acid decarboxylase subfamily. In terms of assembly, homohexamer, formed by a dimer of trimers.

The enzyme catalyses UDP-alpha-D-glucuronate + NAD(+) = UDP-beta-L-threo-pentopyranos-4-ulose + CO2 + NADH. It catalyses the reaction UDP-4-amino-4-deoxy-beta-L-arabinose + (6R)-10-formyltetrahydrofolate = UDP-4-deoxy-4-formamido-beta-L-arabinose + (6S)-5,6,7,8-tetrahydrofolate + H(+). It functions in the pathway nucleotide-sugar biosynthesis; UDP-4-deoxy-4-formamido-beta-L-arabinose biosynthesis; UDP-4-deoxy-4-formamido-beta-L-arabinose from UDP-alpha-D-glucuronate: step 1/3. Its pathway is nucleotide-sugar biosynthesis; UDP-4-deoxy-4-formamido-beta-L-arabinose biosynthesis; UDP-4-deoxy-4-formamido-beta-L-arabinose from UDP-alpha-D-glucuronate: step 3/3. It participates in bacterial outer membrane biogenesis; lipopolysaccharide biosynthesis. Functionally, bifunctional enzyme that catalyzes the oxidative decarboxylation of UDP-glucuronic acid (UDP-GlcUA) to UDP-4-keto-arabinose (UDP-Ara4O) and the addition of a formyl group to UDP-4-amino-4-deoxy-L-arabinose (UDP-L-Ara4N) to form UDP-L-4-formamido-arabinose (UDP-L-Ara4FN). The modified arabinose is attached to lipid A and is required for resistance to polymyxin and cationic antimicrobial peptides. The polypeptide is Bifunctional polymyxin resistance protein ArnA (Sodalis glossinidius (strain morsitans)).